The primary structure comprises 148 residues: uncharacterized protein (148 aa).

The 62-residue stretch at 2–63 folds into the HTH asnC-type domain; the sequence is LDELDKRILY…LINPFKAGYE (62 aa). Residues 21 to 40 constitute a DNA-binding region (H-T-H motif); the sequence is YSEIARILGVPESTVRVRVK.

This is an uncharacterized protein from Pyrococcus furiosus (strain ATCC 43587 / DSM 3638 / JCM 8422 / Vc1).